The following is a 140-amino-acid chain: uncharacterized protein (140 aa).

Asn36 carries an N-linked (GlcNAc...) asparagine glycan. Residues 91–107 (LFMSLIGLCVCYMNLVF) form a helical membrane-spanning segment. The span at 113–122 (QPSSSGSKGN) shows a compositional bias: polar residues. Residues 113–140 (QPSSSGSKGNTETTIETTTEVETETAKQ) form a disordered region. The span at 131-140 (TEVETETAKQ) shows a compositional bias: acidic residues.

Its subcellular location is the endoplasmic reticulum membrane. This is an uncharacterized protein from Saccharomyces cerevisiae (strain ATCC 204508 / S288c) (Baker's yeast).